The chain runs to 151 residues: Probable cGMP 3',5'-cyclic phosphodiesterase subunit delta (151 aa).

It belongs to the PDE6D/unc-119 family. In terms of assembly, interacts with Pde6.

The protein localises to the nucleus. It is found in the cytoplasm. The chain is Probable cGMP 3',5'-cyclic phosphodiesterase subunit delta from Drosophila sechellia (Fruit fly).